Here is a 277-residue protein sequence, read N- to C-terminus: MLSVAMGYVIAAFYRFVHLHNYYDMKPVILEFCLSRGIKGTVILAEQGINATIAGSRQSIGEFFSFLDSDDRLRGMKYHESHSDREPFAKMKVRLKREVVRLGIDGFDCSLRGEYIDPRDWDEFVSSPDVHVIDTRNDYEVRLGRFKGAIDPGTSSFREFPEWARNWALDKERDTCVAMYCTGGIRCEKSTAFMRSLGFRNVYHLRGGILNYLETVRGDDSLWEGECFVFDDRIAVDRNVSPSEDIKCIKCAGEVDASDLRSVSKGNIMCWDCRLQA.

The Rhodanese domain maps to 126–221; that stretch reads SSPDVHVIDT…YLETVRGDDS (96 aa). Cys-181 (cysteine persulfide intermediate) is an active-site residue.

This sequence belongs to the TrhO family.

It carries out the reaction uridine(34) in tRNA + AH2 + O2 = 5-hydroxyuridine(34) in tRNA + A + H2O. Its function is as follows. Catalyzes oxygen-dependent 5-hydroxyuridine (ho5U) modification at position 34 in tRNAs. This Anaplasma marginale (strain Florida) protein is tRNA uridine(34) hydroxylase.